A 160-amino-acid polypeptide reads, in one-letter code: UPF0262 protein Mmar10_1128 (160 aa).

The protein belongs to the UPF0262 family.

In Maricaulis maris (strain MCS10) (Caulobacter maris), this protein is UPF0262 protein Mmar10_1128.